The primary structure comprises 471 residues: Paraneoplastic antigen-like protein 8A (471 aa).

Disordered regions lie at residues 188 to 300 (SAAG…EGSA) and 321 to 471 (ASRG…PSAV). Positions 238–247 (HSRRKRQKKT) are enriched in basic residues. Positions 256–269 (KKSQGSHSHSSASL) are enriched in low complexity. Positions 270–287 (KHPEADDGKNRERLEHVR) are enriched in basic and acidic residues.

This sequence belongs to the PNMA family.

The chain is Paraneoplastic antigen-like protein 8A (PNMA8A) from Bos taurus (Bovine).